We begin with the raw amino-acid sequence, 138 residues long: MAKSISKIGSRKNARIGSRKQTRKIPKGVIYVQASFNNTIVTVTDVRGRVISWSSAGSCGFKGTRRGTPFAAQTAAANAIRTVVDQGMQRAEVIIKGPGLGRDAALRAIRRSGILLRFIRDVTPMPHNGCRAPKKRRV.

The tract at residues 1–21 (MAKSISKIGSRKNARIGSRKQ) is disordered. Residues 9-21 (GSRKNARIGSRKQ) show a composition bias toward basic residues.

It belongs to the universal ribosomal protein uS11 family. Part of the 30S ribosomal subunit.

The protein resides in the plastid. It is found in the chloroplast. This Cicer arietinum (Chickpea) protein is Small ribosomal subunit protein uS11c.